The sequence spans 338 residues: Methionine import ATP-binding protein MetN 2 (338 aa).

Residues 2–242 form the ABC transporter domain; that stretch reads IEIEKVCVDF…PQHAFTQQLV (241 aa). ATP is bound at residue 39-46; sequence GTSGAGKS.

The protein belongs to the ABC transporter superfamily. Methionine importer (TC 3.A.1.24) family. As to quaternary structure, the complex is composed of two ATP-binding proteins (MetN), two transmembrane proteins (MetI) and a solute-binding protein (MetQ).

The protein localises to the cell inner membrane. The enzyme catalyses L-methionine(out) + ATP + H2O = L-methionine(in) + ADP + phosphate + H(+). It carries out the reaction D-methionine(out) + ATP + H2O = D-methionine(in) + ADP + phosphate + H(+). Its function is as follows. Part of the ABC transporter complex MetNIQ involved in methionine import. Responsible for energy coupling to the transport system. In Salmonella choleraesuis (strain SC-B67), this protein is Methionine import ATP-binding protein MetN 2.